Reading from the N-terminus, the 261-residue chain is Pyridoxine-5'-phosphate oxidase (261 aa).

42-45 (RGDR) contributes to the pyridoxal 5'-phosphate binding site. An FMN-binding site is contributed by 95-98 (RMLL). Lys100 is a pyridoxal 5'-phosphate binding site. FMN is bound by residues 110 to 111 (FT), 116 to 117 (RK), and Gln139. Pyridoxal 5'-phosphate is bound by residues Tyr157, Arg161, and Ser165. FMN-binding positions include 174–175 (QS) and Trp219. Pyridoxal 5'-phosphate is bound at residue 225-227 (RLH). An FMN-binding site is contributed by Arg229. Thr238 bears the Phosphothreonine mark. At Ser241 the chain carries Phosphoserine.

It belongs to the pyridoxamine 5'-phosphate oxidase family. As to quaternary structure, homodimer. It depends on FMN as a cofactor. In terms of tissue distribution, ubiquitous. Expressed in liver, brain, lung, prostate and stomach (at protein level).

It catalyses the reaction pyridoxine 5'-phosphate + O2 = pyridoxal 5'-phosphate + H2O2. The catalysed reaction is pyridoxamine 5'-phosphate + O2 + H2O = pyridoxal 5'-phosphate + H2O2 + NH4(+). It functions in the pathway cofactor metabolism; pyridoxal 5'-phosphate salvage; pyridoxal 5'-phosphate from pyridoxamine 5'-phosphate: step 1/1. It participates in cofactor metabolism; pyridoxal 5'-phosphate salvage; pyridoxal 5'-phosphate from pyridoxine 5'-phosphate: step 1/1. In terms of biological role, catalyzes the oxidation of either pyridoxine 5'-phosphate (PNP) or pyridoxamine 5'-phosphate (PMP) into pyridoxal 5'-phosphate (PLP). The polypeptide is Pyridoxine-5'-phosphate oxidase (PNPO) (Homo sapiens (Human)).